The sequence spans 184 residues: uncharacterized protein (184 aa).

The interval 32-52 is disordered; that stretch reads PCPRSRTQGQSRRSETHTISR.

It is found in the mitochondrion. This is an uncharacterized protein from Arabidopsis thaliana (Mouse-ear cress).